Here is a 489-residue protein sequence, read N- to C-terminus: MSLTNLTLKAAIDGLAAREFTSVELTRAHIEAIEAARGLNAYILETPDKAIDMAAKSDARRALGEAGPLEGAPLGVKDLFCTNGVRTTACSKILENFVPTYESTVTSQLWRDGAVMLGKLNLDQFAMGSSNETSYFGPVTNPWRAQGSTKALTPGGSSGGSAAAVAADLCLGATATDTGGSIRQPAAFTGTVGIKPTYGRCSRWGVVAFASSLDQAGPIAKTVEDAALLLTSMSGHDPKDSTSLDIPVPDFTQFVGKSVKGLKIGIPKEYRVDNMPAEIEKLWQDGIAWLKEAGCEIVDISLPHTKYALPAYYIVAPAEASSNLARYDGMRYGLREEGANLTEIYENTRASGFGDEVKRRILIGTYVLSAGYYDAYYLKALKVRRRIAEDFDNAWTQCDAILTPTAPSAAFGLGENSNDPIAMYLNDVFTVTTNLAGLPGLSLPAGLDANGLPLGLQIIGKPLDEATVFSVAGAVEKAAGFTAKAEKWW.

Residues Lys-77 and Ser-157 each act as charge relay system in the active site. Residue Ser-181 is the Acyl-ester intermediate of the active site.

The protein belongs to the amidase family. GatA subfamily. As to quaternary structure, heterotrimer of A, B and C subunits.

It carries out the reaction L-glutamyl-tRNA(Gln) + L-glutamine + ATP + H2O = L-glutaminyl-tRNA(Gln) + L-glutamate + ADP + phosphate + H(+). Its function is as follows. Allows the formation of correctly charged Gln-tRNA(Gln) through the transamidation of misacylated Glu-tRNA(Gln) in organisms which lack glutaminyl-tRNA synthetase. The reaction takes place in the presence of glutamine and ATP through an activated gamma-phospho-Glu-tRNA(Gln). This chain is Glutamyl-tRNA(Gln) amidotransferase subunit A, found in Caulobacter vibrioides (strain ATCC 19089 / CIP 103742 / CB 15) (Caulobacter crescentus).